Here is a 491-residue protein sequence, read N- to C-terminus: Cytochrome P450 2C40 (491 aa).

The signal sequence occupies residues 1-25 (MDPFVVLVLCLSFLLVLSLWRQRSA). A heme-binding site is contributed by Cys435.

This sequence belongs to the cytochrome P450 family. Heme serves as cofactor. Liver, brain, kidney, and intestine, with trace amounts in lung and heart. Expressed throughout the intestinal tract, with higher expression levels in jejunum, cecum and colon.

Its subcellular location is the endoplasmic reticulum membrane. It is found in the microsome membrane. The catalysed reaction is (5Z,8Z,11Z,14Z)-eicosatetraenoate + reduced [NADPH--hemoprotein reductase] + O2 = 16(R)-hydroxy-(5Z,8Z,11Z,14Z)-eicosatetraenoate + oxidized [NADPH--hemoprotein reductase] + H2O + H(+). It carries out the reaction (5Z,8Z,11Z,14Z)-eicosatetraenoate + reduced [NADPH--hemoprotein reductase] + O2 = 16(S)-hydroxy-(5Z,8Z,11Z,14Z)-eicosatetraenoate + oxidized [NADPH--hemoprotein reductase] + H2O + H(+). It catalyses the reaction (5Z,8Z,11Z,14Z)-eicosatetraenoate + reduced [NADPH--hemoprotein reductase] + O2 = (14R,15S)-epoxy-(5Z,8Z,11Z)-eicosatrienoate + oxidized [NADPH--hemoprotein reductase] + H2O + H(+). The enzyme catalyses (5Z,8Z,11Z,14Z)-eicosatetraenoate + reduced [NADPH--hemoprotein reductase] + O2 = (14S,15R)-epoxy-(5Z,8Z,11Z)-eicosatrienoate + oxidized [NADPH--hemoprotein reductase] + H2O + H(+). Its pathway is lipid metabolism; arachidonate metabolism. Functionally, a cytochrome P450 monooxygenase that may play a major role in the metabolism of arachidonic acid in the intestinal tract. Exhibits regioselective hydroxylase and epoxidase activity toward arachidonic acid, producing 16(R)-hydroxyeicosatetraenoic acid (HETE) and (14R,15S)-epoxyeicosatrienoic acid (EpETrE) as major products. Mechanistically, uses molecular oxygen inserting one oxygen atom into a substrate, and reducing the second into a water molecule, with two electrons provided by NADPH via cytochrome P450 reductase (CPR; NADPH-ferrihemoprotein reductase). This is Cytochrome P450 2C40 from Mus musculus (Mouse).